A 1379-amino-acid chain; its full sequence is DNA-directed RNA polymerase subunit beta'' (1379 aa).

Zn(2+) contacts are provided by Cys-224, Cys-295, Cys-302, and Cys-305. The segment at 503–524 is disordered; sequence SVQSLSVKRRSTSKLSETNDEA.

The protein belongs to the RNA polymerase beta' chain family. RpoC2 subfamily. As to quaternary structure, in plastids the minimal PEP RNA polymerase catalytic core is composed of four subunits: alpha, beta, beta', and beta''. When a (nuclear-encoded) sigma factor is associated with the core the holoenzyme is formed, which can initiate transcription. Zn(2+) serves as cofactor.

It is found in the plastid. It carries out the reaction RNA(n) + a ribonucleoside 5'-triphosphate = RNA(n+1) + diphosphate. In terms of biological role, DNA-dependent RNA polymerase catalyzes the transcription of DNA into RNA using the four ribonucleoside triphosphates as substrates. The polypeptide is DNA-directed RNA polymerase subunit beta'' (Cuscuta exaltata (Tall dodder)).